The sequence spans 419 residues: 20-hydroxy-prefusarin hydrolase FUS2 (419 aa).

Residue Ser238 is part of the active site.

This sequence belongs to the AB hydrolase superfamily. FUS2 hydrolase family.

Its pathway is mycotoxin biosynthesis. 20-hydroxy-prefusarin hydrolase; part of the gene cluster that mediates the biosynthesis of the mycotoxin fusarin C. Within the cluster, FUS1, FUS2, FUS8 and FUS9 are sufficient for fusarin production. The roles of the other FUS members are yet undetermined. The fusarin C synthetase FUS1 is responsible for the condensation of one acetyl-coenzyme A (CoA) unit with six malonyl-CoA units and the amide linkage of the arising heptaketide and homoserine, subsequently releasing the first intermediate, prefusarin, as an alcohol with an open ring structure. The cytochrome P450 monooxygenase FUS8 participates in multiple oxidation processes at carbon C-20 and is able to use the FUS1 product as substrate, resulting in formation of 20-hydroxy-prefusarin. This reaction seems to be essential before the 2-pyrrolidone ring closure can be catalyzed by FUS2, generating 20-hydroxy-fusarin. FUS8 is able to further oxidizes carbon C-20 after ring closure, resulting in the formation of carboxy-fusarin C. As the last step, FUS9 methylates the hydroxyl group at C-21 to generate fusarin C. Fusarin C can then rearrange to epi-fusarin C, the (z)-isomers, and fusarin A and fusarin D. This is 20-hydroxy-prefusarin hydrolase FUS2 from Gibberella moniliformis (strain M3125 / FGSC 7600) (Maize ear and stalk rot fungus).